The sequence spans 53 residues: MLLACGLGVALGGGYELLLHSSFIIGNQELNAGLVELGVGLISGWGGVTEMFA.

This is an uncharacterized protein from Rickettsia conorii (strain ATCC VR-613 / Malish 7).